We begin with the raw amino-acid sequence, 343 residues long: Anthranilate phosphoribosyltransferase (343 aa).

5-phospho-alpha-D-ribose 1-diphosphate is bound by residues Gly84, 87–88 (GD), Thr92, 94–97 (NIST), 112–120 (KHGNRSASS), and Ser124. Position 84 (Gly84) interacts with anthranilate. Ser96 is a Mg(2+) binding site. Residue Asn115 participates in anthranilate binding. Arg170 lines the anthranilate pocket. Residues Asp229 and Glu230 each contribute to the Mg(2+) site.

Belongs to the anthranilate phosphoribosyltransferase family. As to quaternary structure, homodimer. Requires Mg(2+) as cofactor.

The catalysed reaction is N-(5-phospho-beta-D-ribosyl)anthranilate + diphosphate = 5-phospho-alpha-D-ribose 1-diphosphate + anthranilate. It functions in the pathway amino-acid biosynthesis; L-tryptophan biosynthesis; L-tryptophan from chorismate: step 2/5. Its function is as follows. Catalyzes the transfer of the phosphoribosyl group of 5-phosphorylribose-1-pyrophosphate (PRPP) to anthranilate to yield N-(5'-phosphoribosyl)-anthranilate (PRA). This chain is Anthranilate phosphoribosyltransferase, found in Bordetella pertussis (strain Tohama I / ATCC BAA-589 / NCTC 13251).